A 670-amino-acid chain; its full sequence is DNA ligase (670 aa).

Residues 32-36 (DAEYD), 81-82 (SL), and E113 each bind NAD(+). The active-site N6-AMP-lysine intermediate is K115. The NAD(+) site is built by R136, E173, K290, and K314. The Zn(2+) site is built by C408, C411, C426, and C432. Residues 592 to 670 (ESDSPFAGKT…EAEMIRLLGE (79 aa)) enclose the BRCT domain.

This sequence belongs to the NAD-dependent DNA ligase family. LigA subfamily. Mg(2+) serves as cofactor. It depends on Mn(2+) as a cofactor.

It carries out the reaction NAD(+) + (deoxyribonucleotide)n-3'-hydroxyl + 5'-phospho-(deoxyribonucleotide)m = (deoxyribonucleotide)n+m + AMP + beta-nicotinamide D-nucleotide.. Its function is as follows. DNA ligase that catalyzes the formation of phosphodiester linkages between 5'-phosphoryl and 3'-hydroxyl groups in double-stranded DNA using NAD as a coenzyme and as the energy source for the reaction. It is essential for DNA replication and repair of damaged DNA. The chain is DNA ligase from Yersinia pestis bv. Antiqua (strain Antiqua).